The sequence spans 557 residues: Tektin-5 (557 aa).

Residues 302-386 (DNIRHAQNMR…LLERAIVAKE (85 aa)) adopt a coiled-coil conformation. A run of 6 repeats spans residues 507–512 (CSGSAL), 513–518 (CKGPAS), 519–524 (CGGGAS), 525–530 (CGGGAS), 531–536 (CGGHAP), and 537–541 (CGSAL). A 6 X 6 AA approximate tandem repeats of C-[GSK]-G-[GSPH]-A-[SLP] region spans residues 507-541 (CSGSALCKGPASCGGGASCGGGASCGGHAPCGSAL).

This sequence belongs to the tektin family. In terms of assembly, microtubule inner protein component of sperm flagellar doublet microtubules. Interacts with TEKT3. Ubiquitinated, leading to its degradation. Deubiquitinated by USP16, promoting its stability. In terms of tissue distribution, strongly expressed in germ cells of the testis (at protein level). Expressed in spermatozoa. Also detected in brain.

Its subcellular location is the cytoplasm. The protein resides in the cytoskeleton. The protein localises to the flagellum axoneme. Functionally, sperm-specific microtubule inner protein (MIP) part of the dynein-decorated doublet microtubules (DMTs) in flagellar axoneme. Forms an extensive interaction network in different conformations that reinforces the helix bundle composed by other tektin proteins (TEKT1 to TEKT4) and MIPs to anchor the tektin bundle onto the tubulin wall of A-tubule of the sperm flagellum. This Mus musculus (Mouse) protein is Tektin-5.